A 270-amino-acid chain; its full sequence is Type III pantothenate kinase (270 aa).

11–18 provides a ligand contact to ATP; that stretch reads DAGNSRIK. Residues Y96 and 103 to 106 each bind substrate; that span reads GSDR. D105 (proton acceptor) is an active-site residue. Residue T129 coordinates ATP. Position 195 (T195) interacts with substrate.

Belongs to the type III pantothenate kinase family. In terms of assembly, homodimer. NH4(+) serves as cofactor. Requires K(+) as cofactor.

Its subcellular location is the cytoplasm. It catalyses the reaction (R)-pantothenate + ATP = (R)-4'-phosphopantothenate + ADP + H(+). Its pathway is cofactor biosynthesis; coenzyme A biosynthesis; CoA from (R)-pantothenate: step 1/5. Functionally, catalyzes the phosphorylation of pantothenate (Pan), the first step in CoA biosynthesis. The sequence is that of Type III pantothenate kinase from Paraburkholderia phytofirmans (strain DSM 17436 / LMG 22146 / PsJN) (Burkholderia phytofirmans).